Here is a 140-residue protein sequence, read N- to C-terminus: Nucleoside diphosphate kinase (140 aa).

ATP is bound by residues Lys11, Phe59, Arg87, Thr93, Arg104, and Asn114. His117 (pros-phosphohistidine intermediate) is an active-site residue.

This sequence belongs to the NDK family. In terms of assembly, homotetramer. Mg(2+) serves as cofactor.

The protein localises to the cytoplasm. It catalyses the reaction a 2'-deoxyribonucleoside 5'-diphosphate + ATP = a 2'-deoxyribonucleoside 5'-triphosphate + ADP. It carries out the reaction a ribonucleoside 5'-diphosphate + ATP = a ribonucleoside 5'-triphosphate + ADP. Its function is as follows. Major role in the synthesis of nucleoside triphosphates other than ATP. The ATP gamma phosphate is transferred to the NDP beta phosphate via a ping-pong mechanism, using a phosphorylated active-site intermediate. This Rhizorhabdus wittichii (strain DSM 6014 / CCUG 31198 / JCM 15750 / NBRC 105917 / EY 4224 / RW1) (Sphingomonas wittichii) protein is Nucleoside diphosphate kinase.